Consider the following 552-residue polypeptide: CTP synthase (552 aa).

An amidoligase domain region spans residues 1 to 267 (MAKFIFVTGG…AEQTLKLLRM (267 aa)). Serine 13 provides a ligand contact to CTP. Serine 13 is a binding site for UTP. ATP is bound by residues 14–19 (SIGKGI) and aspartate 71. 2 residues coordinate Mg(2+): aspartate 71 and glutamate 141. CTP contacts are provided by residues 148–150 (DIE), 188–193 (KTKPTQ), and lysine 224. Residues 188–193 (KTKPTQ) and lysine 224 contribute to the UTP site. One can recognise a Glutamine amidotransferase type-1 domain in the interval 292–534 (DIAIVGKYVQ…IQAAGNHKSQ (243 aa)). Glycine 354 contributes to the L-glutamine binding site. Cysteine 381 acts as the Nucleophile; for glutamine hydrolysis in catalysis. L-glutamine is bound by residues 382–385 (LGMQ), glutamate 405, and arginine 462. Catalysis depends on residues histidine 507 and glutamate 509. Positions 533 to 552 (SQPISDELDNQSTEMSISLS) are disordered.

Belongs to the CTP synthase family. As to quaternary structure, homotetramer.

The catalysed reaction is UTP + L-glutamine + ATP + H2O = CTP + L-glutamate + ADP + phosphate + 2 H(+). It carries out the reaction L-glutamine + H2O = L-glutamate + NH4(+). It catalyses the reaction UTP + NH4(+) + ATP = CTP + ADP + phosphate + 2 H(+). The protein operates within pyrimidine metabolism; CTP biosynthesis via de novo pathway; CTP from UDP: step 2/2. Its activity is regulated as follows. Allosterically activated by GTP, when glutamine is the substrate; GTP has no effect on the reaction when ammonia is the substrate. The allosteric effector GTP functions by stabilizing the protein conformation that binds the tetrahedral intermediate(s) formed during glutamine hydrolysis. Inhibited by the product CTP, via allosteric rather than competitive inhibition. Its function is as follows. Catalyzes the ATP-dependent amination of UTP to CTP with either L-glutamine or ammonia as the source of nitrogen. Regulates intracellular CTP levels through interactions with the four ribonucleotide triphosphates. This Picosynechococcus sp. (strain ATCC 27264 / PCC 7002 / PR-6) (Agmenellum quadruplicatum) protein is CTP synthase.